Here is a 301-residue protein sequence, read N- to C-terminus: Immediate early response gene 5-like protein (301 aa).

This sequence belongs to the IER family.

This is Immediate early response gene 5-like protein (ier5l) from Danio rerio (Zebrafish).